We begin with the raw amino-acid sequence, 340 residues long: Ketol-acid reductoisomerase (NADP(+)) (340 aa).

Residues 1 to 182 enclose the KARI N-terminal Rossmann domain; sequence MTVTMQYEKD…GSARVGLLET (182 aa). NADP(+)-binding positions include 26–29, Arg49, Ser53, and 83–86; these read YGSQ and DEIQ. The active site involves His108. Residue Gly134 coordinates NADP(+). A KARI C-terminal knotted domain is found at 183-328; sequence TFKEETEEDL…AELRKAMPFV (146 aa). Mg(2+) is bound by residues Asp191, Glu195, Glu227, and Glu231. Ser252 contributes to the substrate binding site.

It belongs to the ketol-acid reductoisomerase family. It depends on Mg(2+) as a cofactor.

The catalysed reaction is (2R)-2,3-dihydroxy-3-methylbutanoate + NADP(+) = (2S)-2-acetolactate + NADPH + H(+). The enzyme catalyses (2R,3R)-2,3-dihydroxy-3-methylpentanoate + NADP(+) = (S)-2-ethyl-2-hydroxy-3-oxobutanoate + NADPH + H(+). Its pathway is amino-acid biosynthesis; L-isoleucine biosynthesis; L-isoleucine from 2-oxobutanoate: step 2/4. The protein operates within amino-acid biosynthesis; L-valine biosynthesis; L-valine from pyruvate: step 2/4. Its function is as follows. Involved in the biosynthesis of branched-chain amino acids (BCAA). Catalyzes an alkyl-migration followed by a ketol-acid reduction of (S)-2-acetolactate (S2AL) to yield (R)-2,3-dihydroxy-isovalerate. In the isomerase reaction, S2AL is rearranged via a Mg-dependent methyl migration to produce 3-hydroxy-3-methyl-2-ketobutyrate (HMKB). In the reductase reaction, this 2-ketoacid undergoes a metal-dependent reduction by NADPH to yield (R)-2,3-dihydroxy-isovalerate. In Streptococcus suis (strain 98HAH33), this protein is Ketol-acid reductoisomerase (NADP(+)).